The sequence spans 522 residues: Putative ribose/galactose/methyl galactoside import ATP-binding protein (522 aa).

ABC transporter domains are found at residues 7–244 (LEMV…VGRE) and 254–498 (PKLG…TGQA). Residue 39 to 46 (GENGAGKS) coordinates ATP.

The protein belongs to the ABC transporter superfamily. Carbohydrate importer 2 (CUT2) (TC 3.A.1.2) family.

Its subcellular location is the cell membrane. It catalyses the reaction D-ribose(out) + ATP + H2O = D-ribose(in) + ADP + phosphate + H(+). The catalysed reaction is D-galactose(out) + ATP + H2O = D-galactose(in) + ADP + phosphate + H(+). Part of an ABC transporter complex involved in carbohydrate import. Could be involved in ribose, galactose and/or methyl galactoside import. Responsible for energy coupling to the transport system. The polypeptide is Putative ribose/galactose/methyl galactoside import ATP-binding protein (Halalkalibacterium halodurans (strain ATCC BAA-125 / DSM 18197 / FERM 7344 / JCM 9153 / C-125) (Bacillus halodurans)).